A 193-amino-acid chain; its full sequence is Phosphoheptose isomerase (193 aa).

Residues leucine 37–alanine 193 enclose the SIS domain. Asparagine 52 to glycine 54 serves as a coordination point for substrate. Histidine 61 and glutamate 65 together coordinate Zn(2+). Residues glutamate 65, asparagine 93–aspartate 94, serine 119–serine 121, serine 124, and glutamine 172 each bind substrate. Zn(2+) is bound by residues glutamine 172 and histidine 180.

Belongs to the SIS family. GmhA subfamily. Homotetramer. The cofactor is Zn(2+).

The protein resides in the cytoplasm. The catalysed reaction is 2 D-sedoheptulose 7-phosphate = D-glycero-alpha-D-manno-heptose 7-phosphate + D-glycero-beta-D-manno-heptose 7-phosphate. It functions in the pathway carbohydrate biosynthesis; D-glycero-D-manno-heptose 7-phosphate biosynthesis; D-glycero-alpha-D-manno-heptose 7-phosphate and D-glycero-beta-D-manno-heptose 7-phosphate from sedoheptulose 7-phosphate: step 1/1. The protein operates within bacterial outer membrane biogenesis; LPS core biosynthesis. Functionally, catalyzes the isomerization of sedoheptulose 7-phosphate in D-glycero-D-manno-heptose 7-phosphate. The polypeptide is Phosphoheptose isomerase (Photorhabdus laumondii subsp. laumondii (strain DSM 15139 / CIP 105565 / TT01) (Photorhabdus luminescens subsp. laumondii)).